Reading from the N-terminus, the 372-residue chain is N-methyl-L-tryptophan oxidase (372 aa).

4–34 (DLIIIGSGSVGAAAGYYATRAGLNVLMTDAH) lines the FAD pocket. The residue at position 308 (Cys308) is an S-8alpha-FAD cysteine.

This sequence belongs to the MSOX/MTOX family. MTOX subfamily. In terms of assembly, monomer. The cofactor is FAD.

It catalyses the reaction N(alpha)-methyl-L-tryptophan + O2 + H2O = L-tryptophan + formaldehyde + H2O2. Functionally, catalyzes the oxidative demethylation of N-methyl-L-tryptophan. The sequence is that of N-methyl-L-tryptophan oxidase from Escherichia coli (strain K12 / DH10B).